A 387-amino-acid polypeptide reads, in one-letter code: Pepsin-3 (387 aa).

A signal peptide spans 1-15 (MKWLLLLGLLALSEC). Positions 16 to 59 (IIHKVPLVRKKSLRKNLIEKGLLKDYLKTHTPNLATKYLPKAAF) are cleaved as a propeptide — activation peptide. A Peptidase A1 domain is found at 75-384 (YFGTIGIGTP…DRANNQLGLA (310 aa)). The active site involves Asp-93. 2 cysteine pairs are disulfide-bonded: Cys-106/Cys-111 and Cys-267/Cys-271. The active site involves Asp-276. Cys-310 and Cys-343 are oxidised to a cystine.

Belongs to the peptidase A1 family.

The protein localises to the secreted. It carries out the reaction Preferential cleavage: hydrophobic, preferably aromatic, residues in P1 and P1' positions. Cleaves 1-Phe-|-Val-2, 4-Gln-|-His-5, 13-Glu-|-Ala-14, 14-Ala-|-Leu-15, 15-Leu-|-Tyr-16, 16-Tyr-|-Leu-17, 23-Gly-|-Phe-24, 24-Phe-|-Phe-25 and 25-Phe-|-Tyr-26 bonds in the B chain of insulin.. Functionally, shows particularly broad specificity; although bonds involving phenylalanine and leucine are preferred, many others are also cleaved to some extent. The chain is Pepsin-3 from Oryctolagus cuniculus (Rabbit).